An 83-amino-acid polypeptide reads, in one-letter code: Small ribosomal subunit protein eS21 (83 aa).

It belongs to the eukaryotic ribosomal protein eS21 family. In terms of assembly, component of the 40S small ribosomal subunit. Interacts with sta.

It is found in the cytoplasm. Its subcellular location is the cytosol. The protein localises to the rough endoplasmic reticulum. Functionally, may be an associated component of the ribosome rather than a core structural subunit. May act as a translation initiation factor. Has a role in regulation of cell proliferation in the hematopoietic organs and the imaginal disks of larva. The chain is Small ribosomal subunit protein eS21 (RpS21) from Drosophila ananassae (Fruit fly).